The chain runs to 446 residues: tRNA (guanine-N(7)-)-methyltransferase non-catalytic subunit TRM82 (446 aa).

A disordered region spans residues 67-97; the sequence is LTQTSEDTEQENTAPYKKQKSSVSKPIKVPK. Positions 87-97 are enriched in low complexity; it reads SSVSKPIKVPK. WD repeat units lie at residues 107–147, 202–243, and 247–287; these read PIYN…TENC, GHVS…IVKH, and GHRE…LLSK.

The protein belongs to the WD repeat TRM82 family. As to quaternary structure, forms a heterodimer with the catalytic subunit TRM8.

The protein localises to the nucleus. It participates in tRNA modification; N(7)-methylguanine-tRNA biosynthesis. Its function is as follows. Required for the formation of N(7)-methylguanine at position 46 (m7G46) in tRNA. In the complex, it is required to stabilize and induce conformational changes of the catalytic subunit. This is tRNA (guanine-N(7)-)-methyltransferase non-catalytic subunit TRM82 from Debaryomyces hansenii (strain ATCC 36239 / CBS 767 / BCRC 21394 / JCM 1990 / NBRC 0083 / IGC 2968) (Yeast).